A 344-amino-acid chain; its full sequence is L-rhamnose-proton symporter (344 aa).

The next 10 membrane-spanning stretches (helical) occupy residues 4–24 (AITM…CFYA), 38–58 (WSVG…ALLL), 68–88 (FNLS…IGNI), 101–121 (MGIG…TPII), 137–157 (TLLG…AGQL), 175–195 (LLLA…MNAA), 214–234 (LPSY…FCFI), 259–279 (ILLS…YAWG), 290–310 (MSWM…GLVL), and 321–341 (VAVL…VGLG).

This sequence belongs to the L-rhamnose transporter (TC 2.A.7.6) family.

The protein localises to the cell inner membrane. The enzyme catalyses L-rhamnopyranose(in) + H(+)(in) = L-rhamnopyranose(out) + H(+)(out). Uptake of L-rhamnose across the cytoplasmic membrane with the concomitant transport of protons into the cell (symport system). The chain is L-rhamnose-proton symporter from Salmonella agona (strain SL483).